Here is a 338-residue protein sequence, read N- to C-terminus: UDP-3-O-acylglucosamine N-acyltransferase (338 aa).

Residue histidine 239 is the Proton acceptor of the active site.

This sequence belongs to the transferase hexapeptide repeat family. LpxD subfamily. In terms of assembly, homotrimer.

It catalyses the reaction a UDP-3-O-[(3R)-3-hydroxyacyl]-alpha-D-glucosamine + a (3R)-hydroxyacyl-[ACP] = a UDP-2-N,3-O-bis[(3R)-3-hydroxyacyl]-alpha-D-glucosamine + holo-[ACP] + H(+). The protein operates within bacterial outer membrane biogenesis; LPS lipid A biosynthesis. Its function is as follows. Catalyzes the N-acylation of UDP-3-O-acylglucosamine using 3-hydroxyacyl-ACP as the acyl donor. Is involved in the biosynthesis of lipid A, a phosphorylated glycolipid that anchors the lipopolysaccharide to the outer membrane of the cell. This chain is UDP-3-O-acylglucosamine N-acyltransferase, found in Xylella fastidiosa (strain M23).